The following is a 265-amino-acid chain: 5'-nucleotidase SurE (265 aa).

A divalent metal cation contacts are provided by D9, D10, S40, and N96.

This sequence belongs to the SurE nucleotidase family. A divalent metal cation serves as cofactor.

The protein resides in the cytoplasm. The catalysed reaction is a ribonucleoside 5'-phosphate + H2O = a ribonucleoside + phosphate. Its function is as follows. Nucleotidase that shows phosphatase activity on nucleoside 5'-monophosphates. In Methanothrix thermoacetophila (strain DSM 6194 / JCM 14653 / NBRC 101360 / PT) (Methanosaeta thermophila), this protein is 5'-nucleotidase SurE.